We begin with the raw amino-acid sequence, 327 residues long: Zinc transport protein ZntB (327 aa).

At 1–271 (MDVVAGKALQ…AMNRRTYTMS (271 aa)) the chain is on the cytoplasmic side. The helical transmembrane segment at 272-292 (LLAMVFLPTTFLTGLFGVNLG) threads the bilayer. Over 293–300 (GIPGNTDS) the chain is Periplasmic. The helical transmembrane segment at 301 to 321 (FGFATFCMMLVVLVLGVAWWL) threads the bilayer. The Cytoplasmic portion of the chain corresponds to 322 to 327 (KHSKWL).

Belongs to the CorA metal ion transporter (MIT) (TC 1.A.35) family.

It is found in the cell inner membrane. The catalysed reaction is Zn(2+)(out) + H(+)(out) = Zn(2+)(in) + H(+)(in). Its function is as follows. Zinc transporter. Acts as a Zn(2+):proton symporter, which likely mediates zinc ion uptake. The sequence is that of Zinc transport protein ZntB from Yersinia enterocolitica serotype O:8 / biotype 1B (strain NCTC 13174 / 8081).